Here is a 237-residue protein sequence, read N- to C-terminus: NADPH-dependent FMN reductase ArsH (237 aa).

FMN is bound by residues 39-46 (SNRECSYS) and 102-107 (SPERHG).

This sequence belongs to the ArsH family. In terms of assembly, homotetramer. The cofactor is FMN.

Has NADPH-dependent FMN reductase activity and high NADPH-dependent ferric reductase activity with highest activity for Fe(3+) as substrate. No activity with NADH, iron trichloride, Cu(2+) or Ag(+). May be involved in cytosolic ferric iron assimilation as an NADPH-dependent ferric reductase in vivo. The sequence is that of NADPH-dependent FMN reductase ArsH from Acidithiobacillus ferrooxidans (strain ATCC 23270 / DSM 14882 / CIP 104768 / NCIMB 8455) (Ferrobacillus ferrooxidans (strain ATCC 23270)).